The following is a 279-amino-acid chain: MASGLIGRLVGTKPSKLATAARLIPARWTSTGAEAETKASSGGGRGSNLKTFQIYRWNPDNPGKPELQNYQIDLKDCGPMVLDALIKIKNEMDPSLTFRRSCREGICGSCAMNIDGCNGLACLTKIQDEASETTITPLPHMFVIKDLVVDMTNFYNQYKSIEPWLKRKTPASVPAKEILQSKKDRAKLDGMYECILCACCSTSCPSYWWNPESYLGPAALLHANRWISDSRDEYTKERLEAIDDEFKLYRCHTILNCARACPKGLNPGKQITHIKQLQR.

The N-terminal 28 residues, 1–28, are a transit peptide targeting the mitochondrion; sequence MASGLIGRLVGTKPSKLATAARLIPARW. The 2Fe-2S ferredoxin-type domain occupies 52–141; that stretch reads FQIYRWNPDN…ETTITPLPHM (90 aa). The [2Fe-2S] cluster site is built by cysteine 102, cysteine 107, and cysteine 122. Residues 184–214 form the 4Fe-4S ferredoxin-type domain; that stretch reads DRAKLDGMYECILCACCSTSCPSYWWNPESY. Residues cysteine 194, cysteine 197, and cysteine 200 each coordinate [4Fe-4S] cluster. Cysteine 204 provides a ligand contact to [3Fe-4S] cluster. Tryptophan 209 contributes to the a ubiquinone binding site. [3Fe-4S] cluster contacts are provided by cysteine 251 and cysteine 257. Cysteine 261 contacts [4Fe-4S] cluster.

Belongs to the succinate dehydrogenase/fumarate reductase iron-sulfur protein family. In terms of assembly, component of complex II composed of eight subunits in plants: four classical SDH subunits SDH1, SDH2, SDH3 and SDH4 (a flavoprotein (FP), an iron-sulfur protein (IP), and a cytochrome b composed of a large and a small subunit.), as well as four subunits unknown in mitochondria from bacteria and heterotrophic eukaryotes. It depends on [2Fe-2S] cluster as a cofactor. [3Fe-4S] cluster is required as a cofactor. Requires [4Fe-4S] cluster as cofactor. In terms of tissue distribution, ubiquitous. Preferentially expressed in flowers and inflorescences.

The protein localises to the mitochondrion inner membrane. It catalyses the reaction a quinone + succinate = fumarate + a quinol. The protein operates within carbohydrate metabolism; tricarboxylic acid cycle; fumarate from succinate (eukaryal route): step 1/1. In terms of biological role, iron-sulfur protein (IP) subunit of succinate dehydrogenase (SDH) that is involved in complex II of the mitochondrial electron transport chain and is responsible for transferring electrons from succinate to ubiquinone (coenzyme Q). The protein is Succinate dehydrogenase [ubiquinone] iron-sulfur subunit 1, mitochondrial (SDH2-1) of Arabidopsis thaliana (Mouse-ear cress).